The primary structure comprises 380 residues: Cytochrome b (380 aa).

The next 4 helical transmembrane spans lie at 34–54 (FGSL…LLAA), 78–99 (WLIR…YLHI), 114–134 (WNTG…GYVL), and 179–199 (FFTL…IHLT). Positions 84 and 98 each coordinate heme b. Heme b is bound by residues histidine 183 and histidine 197. Histidine 202 serves as a coordination point for a ubiquinone. 4 helical membrane-spanning segments follow: residues 227 to 247 (LKDI…ALFS), 289 to 309 (LGGV…PLLH), 321 to 341 (FSQL…WVGS), and 348 to 368 (FIII…ILFP).

This sequence belongs to the cytochrome b family. As to quaternary structure, the cytochrome bc1 complex contains 11 subunits: 3 respiratory subunits (MT-CYB, CYC1 and UQCRFS1), 2 core proteins (UQCRC1 and UQCRC2) and 6 low-molecular weight proteins (UQCRH/QCR6, UQCRB/QCR7, UQCRQ/QCR8, UQCR10/QCR9, UQCR11/QCR10 and a cleavage product of UQCRFS1). This cytochrome bc1 complex then forms a dimer. Heme b is required as a cofactor.

Its subcellular location is the mitochondrion inner membrane. Functionally, component of the ubiquinol-cytochrome c reductase complex (complex III or cytochrome b-c1 complex) that is part of the mitochondrial respiratory chain. The b-c1 complex mediates electron transfer from ubiquinol to cytochrome c. Contributes to the generation of a proton gradient across the mitochondrial membrane that is then used for ATP synthesis. This is Cytochrome b (MT-CYB) from Bugeranus carunculatus (Wattled crane).